We begin with the raw amino-acid sequence, 576 residues long: 2-isopropylmalate synthase (576 aa).

One can recognise a Pyruvate carboxyltransferase domain in the interval 31-305 (PIWMSTDLRD…DPGLDFSHVN (275 aa)). Mg(2+)-binding residues include Asp40, His244, His246, and Asn280. The segment at 437-576 (ADGPIGYVSH…RGMAPSMELA (140 aa)) is regulatory domain.

This sequence belongs to the alpha-IPM synthase/homocitrate synthase family. LeuA type 2 subfamily. As to quaternary structure, homodimer. Requires Mg(2+) as cofactor.

It is found in the cytoplasm. The catalysed reaction is 3-methyl-2-oxobutanoate + acetyl-CoA + H2O = (2S)-2-isopropylmalate + CoA + H(+). Its pathway is amino-acid biosynthesis; L-leucine biosynthesis; L-leucine from 3-methyl-2-oxobutanoate: step 1/4. Its function is as follows. Catalyzes the condensation of the acetyl group of acetyl-CoA with 3-methyl-2-oxobutanoate (2-ketoisovalerate) to form 3-carboxy-3-hydroxy-4-methylpentanoate (2-isopropylmalate). The sequence is that of 2-isopropylmalate synthase from Ralstonia nicotianae (strain ATCC BAA-1114 / GMI1000) (Ralstonia solanacearum).